We begin with the raw amino-acid sequence, 224 residues long: Imidazoleglycerol-phosphate dehydratase (224 aa).

The protein belongs to the imidazoleglycerol-phosphate dehydratase family.

It catalyses the reaction D-erythro-1-(imidazol-4-yl)glycerol 3-phosphate = 3-(imidazol-4-yl)-2-oxopropyl phosphate + H2O. It participates in amino-acid biosynthesis; L-histidine biosynthesis; L-histidine from 5-phospho-alpha-D-ribose 1-diphosphate: step 6/9. The polypeptide is Imidazoleglycerol-phosphate dehydratase (HIS3) (Komagataella pastoris (Yeast)).